A 521-amino-acid chain; its full sequence is Cytochrome P450 monooxygenase sdnF (521 aa).

The helical transmembrane segment at 19–39 (YLGLLLSGTVLYTVYKLIIAI) threads the bilayer. Residues Asn178, Asn186, Asn191, Asn309, and Asn416 are each glycosylated (N-linked (GlcNAc...) asparagine). Cys460 is a binding site for heme.

Belongs to the cytochrome P450 family. Heme is required as a cofactor.

The protein resides in the membrane. The protein operates within antibiotic biosynthesis. Functionally, cytochrome P450 monooxygenase; part of the gene cluster that mediates the biosynthesis of sordarin and hypoxysordarin, glycoside antibiotics with a unique tetracyclic diterpene aglycone structure. First, the geranylgeranyl diphosphate synthase sdnC constructs GGDP from farnesyl diphosphate and isopentenyl diphosphate. The diterpene cyclase sdnA then catalyzes the cyclization of GGDP to afford cycloaraneosene. Cycloaraneosene is then hydroxylated four times by the putative cytochrome P450 monooxygenases sdnB, sdnE, sdnF and sdnH to give a hydroxylated cycloaraneosene derivative such as cycloaraneosene-8,9,13,19-tetraol. Although the order of the hydroxylations is unclear, at least C8, C9 and C13 of the cycloaraneosene skeleton are hydroxylated before the sordaricin formation. Dehydration of the 13-hydroxy group of the hydroxylated cycloaraneosene derivative might be catalyzed by an unassigned hypothetical protein such as sdnG and sdnP to construct the cyclopentadiene moiety. The FAD-dependent oxidoreductase sdnN is proposed to catalyze the oxidation at C9 of the hydroxylated cycloaraneosene derivative and also catalyze the Baeyer-Villiger oxidation to give the lactone intermediate. The presumed lactone intermediate would be hydrolyzed to give an acrolein moiety and a carboxylate moiety. Then, [4+2]cycloaddition would occur between the acrolein moiety and the cyclopentadiene moiety to give sordaricin. SdnN might also be involved in the [4+2]cycloaddition after the hypothesized oxidation to accommodate the oxidized product and prompt the [4+2]cycloaddition. GDP-6-deoxy-D-altrose may be biosynthesized from GDP-D-mannose by the putative GDP-mannose-4,6-dehydratase sdnI and the short-chain dehydrogenase sdnK. The glycosyltransferase sdnJ catalyzes the attachment of 6-deoxy-D-altrose onto the 19-hydroxy group of sordaricin to give 4'-O-demethylsordarin. The methyltransferase sdnD would complete the biosynthesis of sordarin. Sordarin can be further modified into hypoxysordarin. The unique acyl chain at the 3'-hydroxy group of hypoxysordarin would be constructed by an iterative type I PKS sdnO and the trans-acting polyketide methyltransferase sdnL. SdnL would be responsible for the introduction of an alpha-methyl group of the polyketide chain. Alternatively, the beta-lactamase-like protein sdnR might be responsible for the cleavage and transfer of the polyketide chain from the PKS sdnO to sordarin. Two putative cytochrome P450 monooxygenases, sdnQ and sdnT, might catalyze the epoxidations of the polyketide chain to complete the biosynthesis of hypoxysordarin. Transcriptional regulators sdnM and sdnS are presumably encoded for the transcriptional regulation of the expression of the sdn gene cluster. The protein is Cytochrome P450 monooxygenase sdnF of Sordaria araneosa (Pleurage araneosa).